We begin with the raw amino-acid sequence, 108 residues long: MKRVTLIVLPRRQFPFLKFHSKEALESAVNLQLIRRKKSVNIQIDSVTFCIYFCLLYFRTLEYHRGTISLHNVTGSKKRDSKANSRSRPSGTITSRGARIGLQGYKSH.

The interval 74-108 (TGSKKRDSKANSRSRPSGTITSRGARIGLQGYKSH) is disordered. Residues 84 to 95 (NSRSRPSGTITS) are compositionally biased toward polar residues.

This is an uncharacterized protein from Saccharomyces cerevisiae (strain ATCC 204508 / S288c) (Baker's yeast).